Consider the following 525-residue polypeptide: GMP synthase [glutamine-hydrolyzing] (525 aa).

The Glutamine amidotransferase type-1 domain maps to 9-207; the sequence is RILILDFGSQ…VLDICQCEAL (199 aa). Cysteine 86 serves as the catalytic Nucleophile. Active-site residues include histidine 181 and glutamate 183. The GMPS ATP-PPase domain occupies 208–400; that stretch reads WTPATIIEDA…LGLPYDMLFR (193 aa). 235 to 241 serves as a coordination point for ATP; sequence SGGVDSS.

In terms of assembly, homodimer.

It carries out the reaction XMP + L-glutamine + ATP + H2O = GMP + L-glutamate + AMP + diphosphate + 2 H(+). The protein operates within purine metabolism; GMP biosynthesis; GMP from XMP (L-Gln route): step 1/1. Its function is as follows. Catalyzes the synthesis of GMP from XMP. The chain is GMP synthase [glutamine-hydrolyzing] from Serratia proteamaculans (strain 568).